The chain runs to 139 residues: Large-conductance mechanosensitive channel (139 aa).

The next 3 helical transmembrane spans lie at 10–30, 40–60, and 80–100; these read FAVK…AAFG, VIMP…YYIA, and LAYG…FIIF.

This sequence belongs to the MscL family. As to quaternary structure, homopentamer.

The protein resides in the cell inner membrane. In terms of biological role, channel that opens in response to stretch forces in the membrane lipid bilayer. May participate in the regulation of osmotic pressure changes within the cell. The protein is Large-conductance mechanosensitive channel of Janthinobacterium sp. (strain Marseille) (Minibacterium massiliensis).